We begin with the raw amino-acid sequence, 87 residues long: Small ribosomal subunit protein uS19m (87 aa).

The protein belongs to the universal ribosomal protein uS19 family.

It localises to the mitochondrion. In Dictyostelium citrinum (Slime mold), this protein is Small ribosomal subunit protein uS19m (mrps19).